We begin with the raw amino-acid sequence, 1086 residues long: Lon protease homolog, mitochondrial (1086 aa).

A mitochondrion-targeting transit peptide spans 1 to 55 (MLRTSCTSSLRRVVGKYVVSPLVASQIRFATSSVRSQPYLLNSELTELPAQFKRY). Positions 61–176 (TEKPEGDVPE…EPNEIVTNAG (116 aa)) are disordered. Residues 69–83 (PESGPEPSGESGISE) are compositionally biased toward low complexity. The segment covering 85–120 (SNVENDKHDGNDEIKPEAEKNEKDEIEKPEIDKDAI) has biased composition (basic and acidic residues). A compositionally biased stretch (low complexity) spans 124 to 163 (DGVSESSVENVSGSSSAAGGASAPPSGNSNNNNNNNNNNN). Residues 183 to 406 (LLAIPMKDRP…KALELLKVEL (224 aa)) form the Lon N-terminal domain. 558–565 (GPPGTGKT) serves as a coordination point for ATP. Basic and acidic residues-rich tracts occupy residues 767 to 782 (EARE…EAKS) and 815 to 827 (KVDE…SEEL). Disordered stretches follow at residues 767–788 (EARE…ITGS) and 800–835 (KAQS…EEEE). Residues 871-1059 (IPPPGVATGL…QDVFDEIFPN (189 aa)) enclose the Lon proteolytic domain. Residues Ser-965 and Lys-1008 contribute to the active site.

Belongs to the peptidase S16 family. Homohexamer or homoheptamer. Organized in a ring with a central cavity.

Its subcellular location is the mitochondrion matrix. It catalyses the reaction Hydrolysis of proteins in presence of ATP.. ATP-dependent serine protease that mediates the selective degradation of misfolded, unassembled or oxidatively damaged polypeptides as well as certain short-lived regulatory proteins in the mitochondrial matrix. May also have a chaperone function in the assembly of inner membrane protein complexes. Participates in the regulation of mitochondrial gene expression and in the maintenance of the integrity of the mitochondrial genome. Binds to mitochondrial DNA in a site-specific manner. In Scheffersomyces stipitis (strain ATCC 58785 / CBS 6054 / NBRC 10063 / NRRL Y-11545) (Yeast), this protein is Lon protease homolog, mitochondrial.